A 193-amino-acid chain; its full sequence is Probable GTP-binding protein EngB (193 aa).

An EngB-type G domain is found at 20 to 193 (GVPEVAFAGR…ELAHEISRCI (174 aa)). GTP contacts are provided by residues 28-35 (GRSNVGKS), 55-59 (GSTRQ), 73-76 (DLPG), 140-143 (TKAD), and 171-176 (IMWVSS). Mg(2+) contacts are provided by Ser35 and Thr57.

Belongs to the TRAFAC class TrmE-Era-EngA-EngB-Septin-like GTPase superfamily. EngB GTPase family. Mg(2+) serves as cofactor.

Necessary for normal cell division and for the maintenance of normal septation. The polypeptide is Probable GTP-binding protein EngB (Anaplasma phagocytophilum (strain HZ)).